The following is a 128-amino-acid chain: Azurin (128 aa).

Residues 1 to 128 (AECKVTVDST…SMMKGTVTVK (128 aa)) form the Plastocyanin-like domain. A disulfide bridge links C3 with C26. Cu cation is bound by residues H46, C112, H117, and M121.

Its subcellular location is the periplasm. Transfers electrons from cytochrome c551 to cytochrome oxidase. The polypeptide is Azurin (Pseudomonas fluorescens biotype A).